Consider the following 822-residue polypeptide: Sodium/hydrogen exchanger 1 (822 aa).

Residues methionine 1–histidine 102 lie on the Extracellular side of the membrane. The disordered stretch occupies residues serine 41–aspartate 73. A helical transmembrane segment spans residues valine 103–valine 125. At isoleucine 126 to proline 134 the chain is on the cytoplasmic side. Residues glutamate 135–glycine 152 traverse the membrane as a helical segment. The Extracellular segment spans residues valine 153 to serine 162. The chain crosses the membrane as a helical span at residues aspartate 163–phenylalanine 180. The Cytoplasmic portion of the chain corresponds to leucine 181–leucine 190. The helical transmembrane segment at glycine 191 to glycine 219 threads the bilayer. Topologically, residues glycine 220–isoleucine 226 are extracellular. The chain crosses the membrane as a helical span at residues glycine 227–isoleucine 253. The Cytoplasmic segment spans residues histidine 254–asparagine 256. The chain crosses the membrane as a helical span at residues glutamate 257 to tyrosine 287. Topologically, residues aspartate 288–glycine 291 are extracellular. The chain crosses the membrane as a helical span at residues isoleucine 292–phenylalanine 326. The Cytoplasmic segment spans residues threonine 327–valine 332. Residues isoleucine 333–alanine 345 traverse the membrane as a helical segment. Over tyrosine 346–leucine 354 the chain is Extracellular. A helical transmembrane segment spans residues serine 355 to isoleucine 375. Topologically, residues serine 376–histidine 377 are cytoplasmic. The helical transmembrane segment at lysine 378–alanine 408 threads the bilayer. At glycine 409–asparagine 414 the chain is on the extracellular side. The helical transmembrane segment at tryptophan 415–lysine 442 threads the bilayer. Over phenylalanine 443 to leucine 448 the chain is Cytoplasmic. Residues threonine 449–methionine 473 traverse the membrane as a helical segment. Topologically, residues aspartate 474–proline 479 are extracellular. A helical membrane pass occupies residues methionine 480 to leucine 509. The tract at residues valine 507–histidine 549 is interaction with TESC. Over leucine 510 to glutamate 822 the chain is Cytoplasmic. The PI(4,5)P2-binding region stretch occupies residues lysine 513 to arginine 520. Residues lysine 519–histidine 549 form an interaction with CHP2 region. Residues histidine 544–histidine 549 form a confers pH-dependent PI(4,5)P2 binding region. A PI(4,5)P2-binding region region spans residues arginine 556 to lysine 564. Residues serine 603 and serine 606 each carry the phosphoserine modification. Threonine 607 is modified (phosphothreonine). Phosphoserine is present on residues serine 609 and serine 652. Residues lysine 637–glutamate 822 are interaction with TESC. An interaction with CALM1 region spans residues lysine 637–glutamate 822. Residues leucine 688–proline 691 are interaction with PPP3CA. Serine 697, serine 701, and serine 707 each carry phosphoserine. The tract at residues proline 719–aspartate 724 is interaction with PPP3CA. Phosphoserine is present on residues serine 727, serine 730, and serine 733. The tract at residues proline 752 to glutamate 822 is disordered. The residue at position 756 (threonine 756) is a Phosphothreonine. A compositionally biased stretch (acidic residues) spans glutamate 759–glycine 768. Threonine 786 bears the Phosphothreonine mark. A phosphoserine mark is found at serine 792, serine 794, and serine 803.

The protein belongs to the monovalent cation:proton antiporter 1 (CPA1) transporter (TC 2.A.36) family. As to quaternary structure, homodimer; dimerization is crucial for its function. Oligomer. Interacts with CALM in a calcium-dependent manner. Interacts with TESC. Interacts (via the juxtamembrane region of the cytoplasmic C-terminal domain) with CHP1; the interaction occurs at the plasma membrane in a calcium-dependent manner. Interacts with CHP2; the interaction occurs in a calcium-dependent manner. Interacts with EZR; regulates the cytoskeletal interactions of SLC9A1 and promotes stress fiber formation. In terms of processing, ubiquitinated, leading to its degradation by the proteasome. Ubiquitination is reduced by CHP1. Post-translationally, O-glycosylated. Palmitoylated; may play a major role in SLC9A1 regulation. In terms of processing, phosphorylation at Thr-786 increases SLC9A1 activity. Specifically dephosphorylated at Thr-786 by PPP3CA that negatively regulates SLC9A1 activity. Phosphorylation at Ser-652 by AKT1 reduces SLC9A1 binding to CALM1.

It localises to the cell membrane. It is found in the basolateral cell membrane. It carries out the reaction Na(+)(in) + H(+)(out) = Na(+)(out) + H(+)(in). It catalyses the reaction Li(+)(out) + H(+)(in) = Li(+)(in) + H(+)(out). The enzyme catalyses Li(+)(in) + Na(+)(out) = Li(+)(out) + Na(+)(in). With respect to regulation, activated at acidic pHs. Inhibited by amiloride and 5-amino-substituted derivatives. Inhibited by cariporide and eniporide. Phosphatidylinositol 4,5-bisphosphate (PI(4,5)P2) and phosphatidylinositol 3,4,5-trisphosphate (PI(3,4,5)P3) bind and differentially regulate SLC9A1 activity. Electroneutral Na(+) /H(+) antiporter that extrudes Na(+) in exchange for external protons driven by the inward sodium ion chemical gradient, protecting cells from acidification that occurs from metabolism. Exchanges intracellular H(+) ions for extracellular Na(+) in 1:1 stoichiometry. Plays a key role in maintening intracellular pH neutral and cell volume, and thus is important for cell growth, proliferation, migration and survival. In addition, can transport lithium Li(+) and also functions as a Na(+)/Li(+) antiporter. SLC9A1 also functions in membrane anchoring and organization of scaffolding complexes that coordinate signaling inputs. The sequence is that of Sodium/hydrogen exchanger 1 (SLC9A1) from Cricetulus griseus (Chinese hamster).